A 58-amino-acid chain; its full sequence is UPF0337 protein CE1672 (58 aa).

Residues 1-39 (MGLGDKIRNTAEKASGKVKEATGKATDNEKLEAEGKTDQ) are compositionally biased toward basic and acidic residues. The interval 1-58 (MGLGDKIRNTAEKASGKVKEATGKATDNEKLEAEGKTDQFKGNAKNTVENAKDTLRGN) is disordered.

This sequence belongs to the UPF0337 (CsbD) family.

The chain is UPF0337 protein CE1672 from Corynebacterium efficiens (strain DSM 44549 / YS-314 / AJ 12310 / JCM 11189 / NBRC 100395).